The primary structure comprises 293 residues: Energy-coupling factor transporter ATP-binding protein EcfA2 (293 aa).

Residues 3–246 (ITFQKVEHRY…ADELEKIGVD (244 aa)) form the ABC transporter domain. 40-47 (GHTGSGKS) serves as a coordination point for ATP.

It belongs to the ABC transporter superfamily. Energy-coupling factor EcfA family. Forms a stable energy-coupling factor (ECF) transporter complex composed of 2 membrane-embedded substrate-binding proteins (S component), 2 ATP-binding proteins (A component) and 2 transmembrane proteins (T component).

It localises to the cell membrane. In terms of biological role, ATP-binding (A) component of a common energy-coupling factor (ECF) ABC-transporter complex. Unlike classic ABC transporters this ECF transporter provides the energy necessary to transport a number of different substrates. The polypeptide is Energy-coupling factor transporter ATP-binding protein EcfA2 (Bacillus cereus (strain ZK / E33L)).